The following is a 2210-amino-acid chain: RNA-directed RNA polymerase L (2210 aa).

Residues 26 to 284 are endonuclease; it reads KDAFLSHCHS…KHEDNTTSDC (259 aa). Mn(2+)-binding residues include Glu-51, Asp-89, and Glu-102. The active site involves Lys-115. Residues 1172–1368 enclose the RdRp catalytic domain; the sequence is CDMKLAVNNG…YLSSKLNKFV (197 aa). Position 1330 (Asp-1330) interacts with Mg(2+).

Belongs to the Bunyavirales RNA polymerase family. As to quaternary structure, homomultimer; the oligomeric structure is essential for the polymerase activity. Interacts with nucleoprotein N. Interacts with protein Z; this interaction inhibits viral transcription and replication, Z partially blocks the product exit tunnel for the releasing nascent RNA product. The cofactor is Mn(2+). Mg(2+) serves as cofactor.

The protein localises to the virion. It localises to the host cytoplasm. It catalyses the reaction RNA(n) + a ribonucleoside 5'-triphosphate = RNA(n+1) + diphosphate. Functionally, RNA-dependent RNA polymerase, which is responsible for the replication and transcription of the viral RNA genome using antigenomic RNA as an intermediate. During transcription, synthesizes subgenomic RNAs and assures their capping by a cap-snatching mechanism, which involves the endonuclease activity cleaving the host capped pre-mRNAs. These short capped RNAs are then used as primers for viral transcription. The 3'-end of subgenomic mRNAs molecules are heterogeneous and not polyadenylated. The replicase function is to direct synthesis of antigenomic and genomic RNA which are encapsidated and non capped. As a consequence of the use of the same enzyme for both transcription and replication, these mechanisms need to be well coordinated. These processes may be regulated by proteins N and Z in a dose-dependent manner. Z protein inhibits the viral polymerase L und thus the viral transcription and RNA synthesis. This Tacaribe virus (strain Franze-Fernandez) (TCRV) protein is RNA-directed RNA polymerase L.